The sequence spans 565 residues: Formate--tetrahydrofolate ligase (565 aa).

Residue 73 to 80 (TPAGEGKS) participates in ATP binding.

It belongs to the formate--tetrahydrofolate ligase family.

The enzyme catalyses (6S)-5,6,7,8-tetrahydrofolate + formate + ATP = (6R)-10-formyltetrahydrofolate + ADP + phosphate. Its pathway is one-carbon metabolism; tetrahydrofolate interconversion. This Arthrobacter sp. (strain FB24) protein is Formate--tetrahydrofolate ligase.